The following is a 479-amino-acid chain: Glucagon receptor (479 aa).

Positions 1–25 (MPPARLRHPHLLLLLLLACQPQAPA) are cleaved as a signal peptide. At 26-136 (AQAMDFLFQK…ELGVQREVAE (111 aa)) the chain is on the extracellular side. 3 disulfide bridges follow: C43/C67, C58/C100, and C81/C121. N46, N59, N74, N78, and N117 each carry an N-linked (GlcNAc...) asparagine glycan. The chain crosses the membrane as a helical span at residues 137–161 (MYSSFQAMYTAGYSLSLAALLLALA). Over 162–173 (ILLGLSKLHCTR) the chain is Cytoplasmic. A helical membrane pass occupies residues 174 to 198 (NYIHANLLASFVLRASSVLALDALL). Residues 199–225 (KTRYSQRLGDDLSVSIWLSDEAVAGCR) lie on the Extracellular side of the membrane. C224 and C294 are oxidised to a cystine. Residues 226–249 (VAAVFMQYGVVANYCWLLVEGVYL) form a helical membrane-spanning segment. Residues 250–263 (HSLLRQATIPERSC) are Cytoplasmic-facing. Residues 264 to 285 (FPLYLAIGWGAPMLFVIPWAVV) traverse the membrane as a helical segment. The Extracellular portion of the chain corresponds to 286 to 303 (KCLFENIQCWTSNDNMGF). A helical membrane pass occupies residues 304–326 (WWILRFPVFLAILINFSIFIRVL). The Cytoplasmic segment spans residues 327-350 (HVLVAKLRAHQMRCTDYKFRLARS). The helical transmembrane segment at 351-369 (TLTLIPLLGVHEVVFAFVT) threads the bilayer. The Extracellular segment spans residues 370-381 (DEHAQGALRSAK). Residues 382–402 (LFFDLFLSSFQGLLVAVLYCF) form a helical membrane-spanning segment. Topologically, residues 403–479 (LNKEVQAELL…GLPGVAENPF (77 aa)) are cytoplasmic. Positions 426–479 (KAHRVGSHSARPPSGPPSEKLLLSTGGSSNGTSQEPSAETHLASGLPGVAENPF) are disordered. The span at 446–458 (LLLSTGGSSNGTS) shows a compositional bias: low complexity. S458 carries the post-translational modification Phosphoserine.

It belongs to the G-protein coupled receptor 2 family. Post-translationally, ligand-binding promotes phosphorylation of serine residues in the C-terminal cytoplasmic domain. Phosphorylation is important for receptor endocytosis after ligand-binding.

The protein resides in the cell membrane. G-protein coupled receptor for glucagon that plays a central role in the regulation of blood glucose levels and glucose homeostasis. Regulates the rate of hepatic glucose production by promoting glycogen hydrolysis and gluconeogenesis. Plays an important role in mediating the responses to fasting. Ligand binding causes a conformation change that triggers signaling via guanine nucleotide-binding proteins (G proteins) and modulates the activity of down-stream effectors, such as adenylate cyclase. Promotes activation of adenylate cyclase. Besides, plays a role in signaling via a phosphatidylinositol-calcium second messenger system. This Sus scrofa (Pig) protein is Glucagon receptor.